The sequence spans 512 residues: Cytochrome P450 71BT1 (512 aa).

Residues 1–24 (MENLFIFLFALLLFCFMLLKLSKK) form the signal peptide. N-linked (GlcNAc...) asparagine glycosylation is found at Asn-111 and Asn-168. Heme is bound at residue Cys-447.

This sequence belongs to the cytochrome P450 family.

The chain is Cytochrome P450 71BT1 from Catharanthus roseus (Madagascar periwinkle).